Reading from the N-terminus, the 506-residue chain is Maturase K (506 aa).

Belongs to the intron maturase 2 family. MatK subfamily.

The protein localises to the plastid. Its subcellular location is the chloroplast. In terms of biological role, usually encoded in the trnK tRNA gene intron. Probably assists in splicing its own and other chloroplast group II introns. The sequence is that of Maturase K from Carica papaya (Papaya).